The following is a 256-amino-acid chain: Thiazole synthase (256 aa).

The Schiff-base intermediate with DXP role is filled by Lys95. 1-deoxy-D-xylulose 5-phosphate contacts are provided by residues Gly156, Ala182–Gly183, and Asn204–Thr205.

Belongs to the ThiG family. In terms of assembly, homotetramer. Forms heterodimers with either ThiH or ThiS.

It is found in the cytoplasm. It catalyses the reaction [ThiS sulfur-carrier protein]-C-terminal-Gly-aminoethanethioate + 2-iminoacetate + 1-deoxy-D-xylulose 5-phosphate = [ThiS sulfur-carrier protein]-C-terminal Gly-Gly + 2-[(2R,5Z)-2-carboxy-4-methylthiazol-5(2H)-ylidene]ethyl phosphate + 2 H2O + H(+). It participates in cofactor biosynthesis; thiamine diphosphate biosynthesis. Functionally, catalyzes the rearrangement of 1-deoxy-D-xylulose 5-phosphate (DXP) to produce the thiazole phosphate moiety of thiamine. Sulfur is provided by the thiocarboxylate moiety of the carrier protein ThiS. In vitro, sulfur can be provided by H(2)S. This is Thiazole synthase from Salmonella paratyphi A (strain ATCC 9150 / SARB42).